Consider the following 189-residue polypeptide: Large ribosomal subunit protein bL9 (189 aa).

The protein belongs to the bacterial ribosomal protein bL9 family.

Functionally, binds to the 23S rRNA. This chain is Large ribosomal subunit protein bL9, found in Methylocella silvestris (strain DSM 15510 / CIP 108128 / LMG 27833 / NCIMB 13906 / BL2).